A 149-amino-acid polypeptide reads, in one-letter code: Stathmin (149 aa).

Position 2 is an N-acetylalanine (Ala-2). At Ser-4 the chain carries Phosphoserine. Positions 4–145 constitute an SLD domain; it reads SDIQVKELEK…NKESKDPADE (142 aa). N6-acetyllysine is present on Lys-9. Ser-16 carries the phosphoserine modification. Position 25 is a phosphoserine; by CDK1, MAPK1 and MAPK3 (Ser-25). N6-methyllysine is present on Lys-29. At Ser-31 the chain carries Phosphoserine. At Ser-38 the chain carries Phosphoserine; by CDK1, MAPK1 and MAPK3. Positions 41-140 form a coiled coil; it reads KKKDLSLEEI…EEVRKNKESK (100 aa). Ser-63 is modified (phosphoserine; by PKA). N6-acetyllysine occurs at positions 100 and 119. The segment covering 121-143 has biased composition (basic and acidic residues); the sequence is ERLREKDKHIEEVRKNKESKDPA. Residues 121 to 149 are disordered; sequence ERLREKDKHIEEVRKNKESKDPADETEAD.

The protein belongs to the stathmin family. In terms of assembly, binds to two alpha/beta-tubulin heterodimers. Interacts with KIST. Many different phosphorylated forms are observed depending on specific combinations among the sites which can be phosphorylated. MAPK is responsible for the phosphorylation of stathmin in response to NGF. Phosphorylation at Ser-16 seems to be required for neuron polarization.

It localises to the cytoplasm. The protein localises to the cytoskeleton. Functionally, involved in the regulation of the microtubule (MT) filament system by destabilizing microtubules. Prevents assembly and promotes disassembly of microtubules. Its phosphorylation at Ser-16 may be required for axon formation during neurogenesis. Involved in the control of the learned and innate fear. This chain is Stathmin (STMN1), found in Bos taurus (Bovine).